An 82-amino-acid polypeptide reads, in one-letter code: Large ribosomal subunit protein bL31B (82 aa).

This sequence belongs to the bacterial ribosomal protein bL31 family. Type B subfamily. In terms of assembly, part of the 50S ribosomal subunit.

This chain is Large ribosomal subunit protein bL31B, found in Dichelobacter nodosus (strain VCS1703A).